The sequence spans 555 residues: MDKRHDPSRRIIAPHGTQLSCKSWLTEAPMRMLMNNLHPDVAERPEDLVVYGGIGRAARDWDCYDKIIEVLQRLEDDETLLVQSGKPVGVFRTHADAPRVLIANSNLVPHWANWEHFNELDKLGLAMYGQMTAGSWIYIGTQGIVQGTYETFVSVAKQHFEGISKGKWILTGGLGGMGGAQTLAGTMAGFSVLACEVDETRIDFRLRTRYVDKKATSLDEALAMIEAANQAGKPVSVGLLANAADVFAELVKRGVTPDVVTDQTSAHDPLNGYLPQGWTMAEAAAMRKTDEAGVVKAAKASMAVQVQAMLNLQTAGAATLDYGNNIRQMAFEMGVENAFDFPGFVPAYIRPLFCEGIGPFRWVALSGDPEDIYKTDAKVKELIPDNPHLHNWLDMARERIAFQGLPARICWIGLKDRARLALAFNEMVKNGELSAPVVIGRDHLDSGSVASPNRETESMLDGSDAVSDWPLLNALLNTASGATWVSLHHGGGVGMGFSQHSGVVIVCDGTDAAAKRVGRVLWNDPATGVMRHADAGYEIAKNCAKEQGLDLPMQD.

NAD(+)-binding positions include 52 to 53 (GG), glutamine 130, 176 to 178 (GMG), glutamate 196, arginine 201, 242 to 243 (NA), 263 to 267 (QTSAH), 273 to 274 (YL), and tyrosine 322. The active site involves cysteine 410. Position 492 (glycine 492) interacts with NAD(+).

It belongs to the urocanase family. It depends on NAD(+) as a cofactor.

It is found in the cytoplasm. The enzyme catalyses 4-imidazolone-5-propanoate = trans-urocanate + H2O. The protein operates within amino-acid degradation; L-histidine degradation into L-glutamate; N-formimidoyl-L-glutamate from L-histidine: step 2/3. Its function is as follows. Catalyzes the conversion of urocanate to 4-imidazolone-5-propionate. The sequence is that of Urocanate hydratase from Shewanella sp. (strain W3-18-1).